We begin with the raw amino-acid sequence, 95 residues long: Co-chaperonin GroES (95 aa).

It belongs to the GroES chaperonin family. In terms of assembly, heptamer of 7 subunits arranged in a ring. Interacts with the chaperonin GroEL.

It localises to the cytoplasm. In terms of biological role, together with the chaperonin GroEL, plays an essential role in assisting protein folding. The GroEL-GroES system forms a nano-cage that allows encapsulation of the non-native substrate proteins and provides a physical environment optimized to promote and accelerate protein folding. GroES binds to the apical surface of the GroEL ring, thereby capping the opening of the GroEL channel. The chain is Co-chaperonin GroES from Francisella philomiragia subsp. philomiragia (strain ATCC 25017 / CCUG 19701 / FSC 153 / O#319-036).